A 36-amino-acid polypeptide reads, in one-letter code: Photosystem I reaction center subunit VIII (36 aa).

The helical transmembrane segment at 6–26 threads the bilayer; that stretch reads LPSIFVPLVGLVFPAIAMASL.

Belongs to the PsaI family.

Its subcellular location is the plastid. The protein resides in the chloroplast thylakoid membrane. May help in the organization of the PsaL subunit. The protein is Photosystem I reaction center subunit VIII of Drimys granadensis.